We begin with the raw amino-acid sequence, 101 residues long: Urease subunit beta (101 aa).

Belongs to the urease beta subunit family. Heterotrimer of UreA (gamma), UreB (beta) and UreC (alpha) subunits. Three heterotrimers associate to form the active enzyme.

It is found in the cytoplasm. It carries out the reaction urea + 2 H2O + H(+) = hydrogencarbonate + 2 NH4(+). It participates in nitrogen metabolism; urea degradation; CO(2) and NH(3) from urea (urease route): step 1/1. The sequence is that of Urease subunit beta from Agrobacterium fabrum (strain C58 / ATCC 33970) (Agrobacterium tumefaciens (strain C58)).